We begin with the raw amino-acid sequence, 155 residues long: UPF0060 membrane protein MA_3936 (155 aa).

The next 3 membrane-spanning stretches (helical) occupy residues 8 to 28 (LCPF…ICLW), 35 to 55 (AVFG…PTFQ), and 62 to 82 (VYAA…LFVD).

Belongs to the UPF0060 family.

It is found in the cell membrane. This chain is UPF0060 membrane protein MA_3936, found in Methanosarcina acetivorans (strain ATCC 35395 / DSM 2834 / JCM 12185 / C2A).